A 505-amino-acid chain; its full sequence is MAQIDFRKKINWHRRYRSPQGVKTEHEILRIFESDRGRIINSPAIRRLQQKTQVFPLERNAAVRTRLTHSMEVQQVGRYIAKEILSRLKELKLLEAYGLDELTGPFESIVEMSCLMHDIGNPPFGHFGEAAINDWFRQRLYPEDAESQPLTDDRCSVAALRLRDGEEPLNALRRKIRQDLCHFEGNAQGIRLVHTLMRMNLTWAQVGGILKYTRPAWWRGETPETHHYLMKKPGYYLSEEAYIARLRKELNLALYSRFPLTWIMEAADDISYCVADLEDAVEKRIFTVEQLYHHLHEAWGQHEKGSLFSLVVENAWEKSRSNSLSRSTEDQFFMYLRVNTLNKLVPYAAQRFIDNLPAIFAGTFNHALLEDASECSDLLKLYKNVAVKHVFSHPDVEQLELQGYRVISGLLEIYRPLLNLSLSDFTELVEKERVKRFPIETRLFHKLSTRHRLAYVEAVSKLPSDSPEFPLWEYYYRCRLLQDYISGMTDLYAWDEYRRLMAVEQ.

Residues 66–273 (RLTHSMEVQQ…MEAADDISYC (208 aa)) enclose the HD domain.

The protein belongs to the dGTPase family. Type 1 subfamily. In terms of assembly, homotetramer. Requires Mg(2+) as cofactor.

The catalysed reaction is dGTP + H2O = 2'-deoxyguanosine + triphosphate + H(+). DGTPase preferentially hydrolyzes dGTP over the other canonical NTPs. In Escherichia coli O127:H6 (strain E2348/69 / EPEC), this protein is Deoxyguanosinetriphosphate triphosphohydrolase.